The chain runs to 1250 residues: Probable autotransporter YfaL (1250 aa).

Residues 1–28 (MRIIFLRKEYLSLLPSMIASLFSANGVA) form the signal peptide. The interval 914 to 951 (RSQEVTPPSPPDPDPTPDPDPTPDPDPTPDPEPTPAYQ) is disordered. Copy 1 of the repeat occupies 919 to 920 (TP). Residues 919–948 (TPPSPPDPDPTPDPDPTPDPDPTPDPEPTP) form a 15 X 2 AA approximate tandem repeats of [DTPE]-P region. One copy of the 2; approximate repeat lies at 921–922 (PS). Residues 923–924 (PP) form repeat 3. Residues 925-926 (DP) form a 4; approximate repeat. 11 consecutive repeat copies span residues 927-928 (DP), 929-930 (TP), 931-932 (DP), 933-934 (DP), 935-936 (TP), 937-938 (DP), 939-940 (DP), 941-942 (TP), 943-944 (DP), 945-946 (EP), and 947-948 (TP). Residues 928–942 (PTPDPDPTPDPDPTP) show a composition bias toward acidic residues. The Autotransporter domain maps to 980–1250 (AGGDGQTLNL…AGFLSMTVKW (271 aa)).

Post-translationally, an approximately 170 kDa protein is detected in the outer membrane, while a C-terminal 55 kDa fragment is detected in whole cells. The full-length putative autotransporter may be cleaved to release the mature protein from the outer membrane; Pefabloc SC, a Ser-Thr protease inhibitor prevents the appearance of the 55 kDa C--terminal fragment.

The protein resides in the periplasm. It localises to the secreted. The protein localises to the cell surface. It is found in the cell outer membrane. Probably an autotransporter. Upon overexpression shows increased adherence to polyvinyl chloride (PVC) plates, increased mature biofilm formation. This Escherichia coli (strain K12) protein is Probable autotransporter YfaL (yfaL).